Here is a 353-residue protein sequence, read N- to C-terminus: Thiamine-phosphate synthase (353 aa).

The interval 1–128 (MKSMPVAPIA…AASAAAIRYG (128 aa)) is unknown. A thiamine-phosphate synthase region spans residues 129-353 (LYDLEVTVLQ…TSLQLLEALR (225 aa)). 4-amino-2-methyl-5-(diphosphooxymethyl)pyrimidine-binding positions include 185-189 (QYRNK) and N217. Residues D218 and D237 each contribute to the Mg(2+) site. A 4-amino-2-methyl-5-(diphosphooxymethyl)pyrimidine-binding site is contributed by S256. 282 to 284 (TAT) serves as a coordination point for 2-[(2R,5Z)-2-carboxy-4-methylthiazol-5(2H)-ylidene]ethyl phosphate. K285 contributes to the 4-amino-2-methyl-5-(diphosphooxymethyl)pyrimidine binding site. A 2-[(2R,5Z)-2-carboxy-4-methylthiazol-5(2H)-ylidene]ethyl phosphate-binding site is contributed by G312.

It belongs to the thiamine-phosphate synthase family. Mg(2+) is required as a cofactor.

The enzyme catalyses 2-[(2R,5Z)-2-carboxy-4-methylthiazol-5(2H)-ylidene]ethyl phosphate + 4-amino-2-methyl-5-(diphosphooxymethyl)pyrimidine + 2 H(+) = thiamine phosphate + CO2 + diphosphate. The catalysed reaction is 2-(2-carboxy-4-methylthiazol-5-yl)ethyl phosphate + 4-amino-2-methyl-5-(diphosphooxymethyl)pyrimidine + 2 H(+) = thiamine phosphate + CO2 + diphosphate. It carries out the reaction 4-methyl-5-(2-phosphooxyethyl)-thiazole + 4-amino-2-methyl-5-(diphosphooxymethyl)pyrimidine + H(+) = thiamine phosphate + diphosphate. It participates in cofactor biosynthesis; thiamine diphosphate biosynthesis; thiamine phosphate from 4-amino-2-methyl-5-diphosphomethylpyrimidine and 4-methyl-5-(2-phosphoethyl)-thiazole: step 1/1. Condenses 4-methyl-5-(beta-hydroxyethyl)thiazole monophosphate (THZ-P) and 2-methyl-4-amino-5-hydroxymethyl pyrimidine pyrophosphate (HMP-PP) to form thiamine monophosphate (TMP). This is Thiamine-phosphate synthase from Prochlorococcus marinus (strain MIT 9303).